A 176-amino-acid polypeptide reads, in one-letter code: Nucleoside triphosphate/diphosphate phosphatase (176 aa).

Arg23 acts as the Proton donor in catalysis. Positions 87, 103, 105, 107, 120, and 123 each coordinate Mg(2+).

It belongs to the Ntdp family. It depends on Mg(2+) as a cofactor.

The enzyme catalyses a ribonucleoside 5'-triphosphate + H2O = a ribonucleoside 5'-diphosphate + phosphate + H(+). It catalyses the reaction a ribonucleoside 5'-diphosphate + H2O = a ribonucleoside 5'-phosphate + phosphate + H(+). Has nucleoside phosphatase activity towards nucleoside triphosphates and nucleoside diphosphates. This is Nucleoside triphosphate/diphosphate phosphatase from Bacillus cereus (strain B4264).